A 197-amino-acid polypeptide reads, in one-letter code: Large ribosomal subunit protein uL5 (197 aa).

It belongs to the universal ribosomal protein uL5 family. As to quaternary structure, part of the 50S ribosomal subunit; contacts the 5S rRNA and probably tRNA. Forms a bridge to the 30S subunit in the 70S ribosome.

Its function is as follows. This is one of the proteins that bind and probably mediate the attachment of the 5S RNA into the large ribosomal subunit, where it forms part of the central protuberance. In the 70S ribosome it contacts protein S13 of the 30S subunit (bridge B1b), connecting the 2 subunits; this bridge is implicated in subunit movement. May contact the P site tRNA; the 5S rRNA and some of its associated proteins might help stabilize positioning of ribosome-bound tRNAs. This chain is Large ribosomal subunit protein uL5, found in Caldivirga maquilingensis (strain ATCC 700844 / DSM 13496 / JCM 10307 / IC-167).